Consider the following 64-residue polypeptide: Small ribosomal subunit protein bS21 (64 aa).

The protein belongs to the bacterial ribosomal protein bS21 family.

The chain is Small ribosomal subunit protein bS21 from Anaeromyxobacter dehalogenans (strain 2CP-1 / ATCC BAA-258).